Reading from the N-terminus, the 615-residue chain is Nitrogen permease regulator 2 (615 aa).

Residues 143-167 (STTTPSTAGPSSTPNPSSNTTPTHP) are compositionally biased toward low complexity. 3 disordered regions span residues 143–176 (STTTPSTAGPSSTPNPSSNTTPTHPTSEKDTKDM), 354–398 (SLGS…QNSS), and 527–551 (SATGSRNTAQSGNLKPERPSKVSFE). Ser-362 carries the phosphoserine modification. Low complexity predominate over residues 373–398 (SSSIPSNPDSRTTSFSSTSRVSQNSS). Residues 527–539 (SATGSRNTAQSGN) are compositionally biased toward polar residues.

It belongs to the NPR2 family. As to quaternary structure, component of the SEA complex composed of at least IML1/SEA1, RTC1/SEA2, MTC5/SEA3, NPR2, NPR3, SEA4, SEC13 and SEH1. Forms a heterodimer with NPR3.

The protein resides in the vacuole membrane. Its function is as follows. Component of the SEA complex which coats the vacuolar membrane and is involved in intracellular trafficking, autophagy, response to nitrogen starvation, and amino acid biogenesis. Mediates inactivation of the TORC1 complex in response to amino acid starvation. Post-transcriptional regulator of nitrogen permeases. May be involved in putative NPR1-dependent phosphorylation of nitrogen permeases or in the processing and targeting of nitrogen permeases at the level of the endoplasmic reticulum. The protein is Nitrogen permease regulator 2 (NPR2) of Saccharomyces cerevisiae (strain ATCC 204508 / S288c) (Baker's yeast).